We begin with the raw amino-acid sequence, 122 residues long: Large ribosomal subunit protein uL14 (122 aa).

This sequence belongs to the universal ribosomal protein uL14 family. Part of the 50S ribosomal subunit. Forms a cluster with proteins L3 and L19. In the 70S ribosome, L14 and L19 interact and together make contacts with the 16S rRNA in bridges B5 and B8.

Its function is as follows. Binds to 23S rRNA. Forms part of two intersubunit bridges in the 70S ribosome. In Leptothrix cholodnii (strain ATCC 51168 / LMG 8142 / SP-6) (Leptothrix discophora (strain SP-6)), this protein is Large ribosomal subunit protein uL14.